Here is a 649-residue protein sequence, read N- to C-terminus: tRNA-guanine(15) transglycosylase (649 aa).

The active-site Nucleophile is Asp-88. Substrate-binding residues include Asp-123 and Ala-194. Positions 280, 282, and 285 each coordinate Zn(2+). One can recognise a PUA domain in the interval 572–647 (KYRVIVDKSV…VAVNIRGGLK (76 aa)).

Belongs to the archaeosine tRNA-ribosyltransferase family. Requires Zn(2+) as cofactor.

The catalysed reaction is guanosine(15) in tRNA + 7-cyano-7-deazaguanine = 7-cyano-7-carbaguanosine(15) in tRNA + guanine. It participates in tRNA modification; archaeosine-tRNA biosynthesis. Functionally, exchanges the guanine residue with 7-cyano-7-deazaguanine (preQ0) at position 15 in the dihydrouridine loop (D-loop) of archaeal tRNAs. This Methanococcus vannielii (strain ATCC 35089 / DSM 1224 / JCM 13029 / OCM 148 / SB) protein is tRNA-guanine(15) transglycosylase.